The primary structure comprises 126 residues: Holo-[acyl-carrier-protein] synthase (126 aa).

The Mg(2+) site is built by aspartate 8 and glutamate 59.

This sequence belongs to the P-Pant transferase superfamily. AcpS family. Requires Mg(2+) as cofactor.

The protein resides in the cytoplasm. It catalyses the reaction apo-[ACP] + CoA = holo-[ACP] + adenosine 3',5'-bisphosphate + H(+). Transfers the 4'-phosphopantetheine moiety from coenzyme A to a Ser of acyl-carrier-protein. The protein is Holo-[acyl-carrier-protein] synthase of Rickettsia akari (strain Hartford).